The sequence spans 410 residues: Histidine--tRNA ligase (410 aa).

The protein belongs to the class-II aminoacyl-tRNA synthetase family.

Its subcellular location is the cytoplasm. It catalyses the reaction tRNA(His) + L-histidine + ATP = L-histidyl-tRNA(His) + AMP + diphosphate + H(+). In Methanoculleus marisnigri (strain ATCC 35101 / DSM 1498 / JR1), this protein is Histidine--tRNA ligase.